Here is a 362-residue protein sequence, read N- to C-terminus: Sphingosine 1-phosphate receptor 1 (362 aa).

Residues 1-25 (MDDLIARHYNFTGKFRKVHKDPGLK) lie on the Extracellular side of the membrane. Asn10 is a glycosylation site (N-linked (GlcNAc...) asparagine). A helical membrane pass occupies residues 26 to 47 (ADSVVFIIVCCFIILENVLVLL). Topologically, residues 48–61 (TIWRTKKFHKPMYY) are cytoplasmic. The helical transmembrane segment at 62–83 (FIGNLALSDLLAGVVYTANILL) threads the bilayer. Topologically, residues 84-95 (SGANTYKLTPTQ) are extracellular. Residues 96 to 117 (WFFREGSMFVALAASVFSLLAI) form a helical membrane-spanning segment. 99 to 100 (RE) contacts sphing-4-enine 1-phosphate. Residues 118–139 (AIERHLTMLKMKLHNNGKTCRV) lie on the Cytoplasmic side of the membrane. A helical membrane pass occupies residues 140 to 161 (FMLISTVWFIAAILGGLPVMGW). Residues 162-175 (NCIDSMNNCSTVLP) are Extracellular-facing. A disulfide bridge connects residues Cys163 and Cys170. Asn169 carries an N-linked (GlcNAc...) asparagine glycan. A helical transmembrane segment spans residues 176-203 (LYHKAYILFCTTVFSVILMAIVILYARI). At 204 to 238 (YALVRTRSRKLVFRKVANGRGSNKSSEKSMALLKT) the chain is on the cytoplasmic side. A helical transmembrane segment spans residues 239–259 (VIIVLSCFIACWAPLFILLLL). 246 to 250 (FIACW) serves as a coordination point for sphing-4-enine 1-phosphate. Topologically, residues 260-270 (DVACQTLTCSI) are extracellular. The cysteines at positions 263 and 268 are disulfide-linked. Residues 271 to 291 (LYKAEWFLALAVLNSAMNPLI) traverse the membrane as a helical segment. Residues 292–362 (YTLTSNEMRR…VSSGNITSSS (71 aa)) lie on the Cytoplasmic side of the membrane. Cys309 carries S-palmitoyl cysteine lipidation. The interval 328 to 362 (FSRSKSDNSSHPNKDEPEYSPRETIVSSGNITSSS) is disordered. Residues 329-348 (SRSKSDNSSHPNKDEPEYSP) show a composition bias toward basic and acidic residues. The segment covering 352-362 (IVSSGNITSSS) has biased composition (polar residues).

It belongs to the G-protein coupled receptor 1 family.

It localises to the cell membrane. Its function is as follows. G-protein coupled receptor for the bioactive lysosphingolipid sphingosine 1-phosphate (S1P) that seems to be coupled to the G(i) subclass of heteromeric G proteins. Signaling leads to the activation of RAC1, SRC, PTK2/FAK1 and MAP kinases. Plays an important role in cell migration, probably via its role in the reorganization of the actin cytoskeleton and the formation of lamellipodia in response to stimuli that increase the activity of the sphingosine kinase SPHK1. Required for normal chemotaxis toward sphingosine 1-phosphate. This is Sphingosine 1-phosphate receptor 1 (s1pr1) from Danio rerio (Zebrafish).